The chain runs to 1513 residues: DNA polymerase alpha catalytic subunit (1513 aa).

Positions 235–254 (STNQNANASDSKRVSNQTND) are disordered. Cys-1344, Cys-1347, Cys-1370, Cys-1373, Cys-1404, Cys-1409, Cys-1422, and Cys-1427 together coordinate Zn(2+). Residues 1344 to 1373 (CPHCSESYHFPGIFQDGKNNTLSGLLCIKC) form a CysA-type zinc finger. The short motif at 1404-1427 (CQEPACGAVSRQLLYNNKCINLAC) is the CysB motif element.

Belongs to the DNA polymerase type-B family.

It localises to the nucleus. It catalyses the reaction DNA(n) + a 2'-deoxyribonucleoside 5'-triphosphate = DNA(n+1) + diphosphate. Its function is as follows. Polymerase alpha in a complex with DNA primase is a replicative polymerase. This chain is DNA polymerase alpha catalytic subunit, found in Oxytricha trifallax (Sterkiella histriomuscorum).